The following is a 610-amino-acid chain: E-selectin (610 aa).

A signal peptide spans 1-21; it reads MIASQFLSALTLVLLIKESGA. A C-type lectin domain is found at 22 to 139; sequence WSYNTSTEAM…CSKKKLALCY (118 aa). Over 22–556 the chain is Extracellular; it reads WSYNTSTEAM…CEAPTESNIP (535 aa). N-linked (GlcNAc...) asparagine glycosylation is present at N25. Intrachain disulfides connect C40–C138, C111–C130, C143–C154, C148–C163, and C165–C174. The Ca(2+) site is built by E101, N103, and E109. A carbohydrate is bound by residues 101 to 109, 113 to 118, and 126 to 128; these read EPNNRQKDE, EIYIKR, and NDE. N126 and D127 together coordinate Ca(2+). In terms of domain architecture, EGF-like spans 140-175; that stretch reads TAACTNTSCSGHGECVETINNYTCKCDPGFSGLKCE. 2 N-linked (GlcNAc...) asparagine glycosylation sites follow: N145 and N160. Sushi domains are found at residues 178–239, 240–301, 303–364, 366–427, 429–490, and 491–549; these read VNCT…ACNV, VECD…TCKA, TCRA…VCEA, QCTA…TCEA, RCDA…SCQV, and VKCS…TCEA. N-linked (GlcNAc...) asparagine glycosylation is found at N179, N199, and N203. 14 disulfides stabilise this stretch: C180–C224, C193–C206, C210–C237, C242–C286, C255–C268, C272–C299, C304–C349, C335–C362, C367–C412, C398–C425, C430–C475, C461–C488, C493–C534, and C520–C547. The N-linked (GlcNAc...) asparagine glycan is linked to N265. N-linked (GlcNAc...) asparagine glycosylation is found at N312 and N332. 2 N-linked (GlcNAc...) asparagine glycosylation sites follow: N503 and N527. A helical membrane pass occupies residues 557 to 578; it reads LVAGLSAAGLSLLTLAPFLLWL. Over 579-610 the chain is Cytoplasmic; sequence RKCLRKAKKFVPASSCQSLESDGSYQKPSYIL.

The protein belongs to the selectin/LECAM family. Interacts with SELPLG/PSGL1 and PODXL2 through the sialyl Lewis X epitope. SELPLG sulfation appears not to be required for this interaction.

It localises to the cell membrane. Cell-surface glycoprotein having a role in immunoadhesion. Mediates in the adhesion of blood neutrophils in cytokine-activated endothelium through interaction with SELPLG/PSGL1. May have a role in capillary morphogenesis. The sequence is that of E-selectin (SELE) from Homo sapiens (Human).